Consider the following 378-residue polypeptide: Erythronate-4-phosphate dehydrogenase (378 aa).

The substrate site is built by S45 and T66. NAD(+)-binding residues include D146 and T175. Residue R208 is part of the active site. An NAD(+)-binding site is contributed by D232. E237 is an active-site residue. Catalysis depends on H254, which acts as the Proton donor. An NAD(+)-binding site is contributed by G257. Y258 contributes to the substrate binding site.

It belongs to the D-isomer specific 2-hydroxyacid dehydrogenase family. PdxB subfamily. As to quaternary structure, homodimer.

The protein localises to the cytoplasm. It carries out the reaction 4-phospho-D-erythronate + NAD(+) = (R)-3-hydroxy-2-oxo-4-phosphooxybutanoate + NADH + H(+). The protein operates within cofactor biosynthesis; pyridoxine 5'-phosphate biosynthesis; pyridoxine 5'-phosphate from D-erythrose 4-phosphate: step 2/5. Functionally, catalyzes the oxidation of erythronate-4-phosphate to 3-hydroxy-2-oxo-4-phosphonooxybutanoate. The protein is Erythronate-4-phosphate dehydrogenase of Salmonella agona (strain SL483).